The sequence spans 100 residues: Urease subunit gamma (100 aa).

This sequence belongs to the urease gamma subunit family. In terms of assembly, heterotrimer of UreA (gamma), UreB (beta) and UreC (alpha) subunits. Three heterotrimers associate to form the active enzyme.

It is found in the cytoplasm. The catalysed reaction is urea + 2 H2O + H(+) = hydrogencarbonate + 2 NH4(+). Its pathway is nitrogen metabolism; urea degradation; CO(2) and NH(3) from urea (urease route): step 1/1. This Staphylococcus epidermidis (strain ATCC 35984 / DSM 28319 / BCRC 17069 / CCUG 31568 / BM 3577 / RP62A) protein is Urease subunit gamma.